A 184-amino-acid polypeptide reads, in one-letter code: Ribosome-recycling factor (184 aa).

The protein belongs to the RRF family.

It is found in the cytoplasm. Its function is as follows. Responsible for the release of ribosomes from messenger RNA at the termination of protein biosynthesis. May increase the efficiency of translation by recycling ribosomes from one round of translation to another. The sequence is that of Ribosome-recycling factor from Bifidobacterium adolescentis (strain ATCC 15703 / DSM 20083 / NCTC 11814 / E194a).